The primary structure comprises 984 residues: MSNPNNIESSKTNLTTSIQAALSQLENAYNPSEVEAGMYQGWEDSGYFQPTFDKDESFSIALPPPNVTGSLHMGHGFNNAIMDALTRYHRMDGDNTLWQPGTDHAGIATQMVVERRLEAEGIKRRDMSREDFIDKVWEWKEESGGNITRQIRRLGSSVDWSRERFTMDDGLSNAVKEVFVRLFDDGLIYRGKRLVNWDPKFQTALSDLEVENVDEKGSLWHFRYHFTDTDITTQDGKNYLVVATTRPETSLGDTAVAVNPKDERYAHLIGKTITLPITGRIVPIVADDYVDIEFGTGCVKITPAHDFNDYELGRRHELPLINILDAHAHILPAMEVYPDLQTREPTLETTPADYAGLERFAARKLLVEQAGEQGWLEKIEDYALKAPRAERGGAIVEPWLTDQWYVAVKELAQPAIAAVEDGQIEFVPAQYKNMYMAWMNGIQDWCISRQLWWGHRIPAWYDEEGSIYVARDEAEVRSKYNLAADVKLRQDDDVLDTWFSSGLWTFSTLDWADVNADPRVMETFHPTSVLVTGFDIIFFWVARMIMMTMHFVKNEDGTPQIPFKTVYVHGLVRDGNGQKMSKSKGNVLDPIDIIDGIELEALVEKRTSNMMNPKDAAKIEKQTRKEFPEGIPAFGTDALRFTFTSLASTGRDINFDLKRVEGYRNFCNKIWNASRFVLMNCVDKEGNAQAIDQTANADVWELPEKWIMSRLNSTITNIHQHFDQYRLDMVSHDIYEFIWNEYCDWYVELAKASLNDDSVSDERKAQIRYVLLHVLETALRFSHPIMPYLTEQIWQTIAPLLNRKETDSIVIAAYPQTDNSQISEQTEADMAWLQELIASVRNIRGEMKLGNAVRLPVLLQNISAAEDTRLSRIANQFKALAKVESLTILKEGDEVPLSSSSMVGQLRVLVPMKGLIDPTAELARLGKSYDKLKGQSEGIARKLGNEGFVSKAPVEVVDAEKAKLAELEGQLTAMTAQMEELKNL.

Residues 65–75 (PNVTGSLHMGH) carry the 'HIGH' region motif. The short motif at 579–583 (KMSKS) is the 'KMSKS' region element. Residue K582 coordinates ATP. Positions 954–984 (VEVVDAEKAKLAELEGQLTAMTAQMEELKNL) form a coiled coil.

The protein belongs to the class-I aminoacyl-tRNA synthetase family. ValS type 1 subfamily. As to quaternary structure, monomer.

The protein resides in the cytoplasm. The catalysed reaction is tRNA(Val) + L-valine + ATP = L-valyl-tRNA(Val) + AMP + diphosphate. In terms of biological role, catalyzes the attachment of valine to tRNA(Val). As ValRS can inadvertently accommodate and process structurally similar amino acids such as threonine, to avoid such errors, it has a 'posttransfer' editing activity that hydrolyzes mischarged Thr-tRNA(Val) in a tRNA-dependent manner. This chain is Valine--tRNA ligase, found in Psychrobacter arcticus (strain DSM 17307 / VKM B-2377 / 273-4).